The primary structure comprises 657 residues: Glycogen debranching enzyme (657 aa).

Asp336 serves as the catalytic Nucleophile. The active-site Proton donor is the Glu371. Residues 460 to 479 are disordered; it reads ANGEENRDGTNNNYSNNHGK.

The protein belongs to the glycosyl hydrolase 13 family.

The catalysed reaction is Hydrolysis of (1-&gt;6)-alpha-D-glucosidic linkages to branches with degrees of polymerization of three or four glucose residues in limit dextrin.. It participates in glycan degradation; glycogen degradation. Removes maltotriose and maltotetraose chains that are attached by 1,6-alpha-linkage to the limit dextrin main chain, generating a debranched limit dextrin. In Escherichia coli O9:H4 (strain HS), this protein is Glycogen debranching enzyme.